The sequence spans 441 residues: 5-methylthioadenosine/S-adenosylhomocysteine deaminase (441 aa).

His-70 and His-72 together coordinate Zn(2+). Residues Glu-99 and His-191 each contribute to the substrate site. His-218 contributes to the Zn(2+) binding site. 2 residues coordinate substrate: Glu-221 and Asp-306. Asp-306 provides a ligand contact to Zn(2+).

Belongs to the metallo-dependent hydrolases superfamily. MTA/SAH deaminase family. Zn(2+) serves as cofactor.

The catalysed reaction is S-adenosyl-L-homocysteine + H2O + H(+) = S-inosyl-L-homocysteine + NH4(+). The enzyme catalyses S-methyl-5'-thioadenosine + H2O + H(+) = S-methyl-5'-thioinosine + NH4(+). Functionally, catalyzes the deamination of 5-methylthioadenosine and S-adenosyl-L-homocysteine into 5-methylthioinosine and S-inosyl-L-homocysteine, respectively. Is also able to deaminate adenosine. This chain is 5-methylthioadenosine/S-adenosylhomocysteine deaminase, found in Lawsonia intracellularis (strain PHE/MN1-00).